The chain runs to 309 residues: MAATLRELRGRIRSAGSIKKITKAQEMIATSRIAKAQARVEAARPYDREITNMLTELATASALDHPLLVQRENPRRAGVLVVSSDRGLAGAYNANVFRRSEELFSLLREEGKEPVLYVVGRKALSYYSFRNWDVTESWSGFSERPEYEHAQEIGETLVKAFMAGVDDEGDDAGADGILGLDELHIVFTEFRSMLSQSAIARRIAPMVVEYSEEDTNEPHTLFSFEPSAETLFDALLPRYVSTRIFAAMLEAAASESASRRRAMKSASDNADDLIKDLTLMANRERQSQITQEISEIVGGANALADAAKK.

The protein belongs to the ATPase gamma chain family. In terms of assembly, F-type ATPases have 2 components, CF(1) - the catalytic core - and CF(0) - the membrane proton channel. CF(1) has five subunits: alpha(3), beta(3), gamma(1), delta(1), epsilon(1). CF(0) has three main subunits: a, b and c.

The protein localises to the cell membrane. Its function is as follows. Produces ATP from ADP in the presence of a proton gradient across the membrane. The gamma chain is believed to be important in regulating ATPase activity and the flow of protons through the CF(0) complex. The polypeptide is ATP synthase gamma chain (Mycobacterium sp. (strain JLS)).